The primary structure comprises 506 residues: Histidine--tRNA ligase, mitochondrial (506 aa).

The transit peptide at 1–33 directs the protein to the mitochondrion; that stretch reads MPQLGLLPGRAWTVLLGLLRPPPGALCIRAVRS. Serine 67 is modified (phosphoserine). Residues 131-133, arginine 158, glutamine 174, aspartate 178, arginine 327, and 331-332 each bind L-histidine; these read DLT and YY. The residue at position 444 (lysine 444) is an N6-acetyllysine.

It belongs to the class-II aminoacyl-tRNA synthetase family. Homodimer.

The protein localises to the mitochondrion. The catalysed reaction is tRNA(His) + L-histidine + ATP = L-histidyl-tRNA(His) + AMP + diphosphate + H(+). In terms of biological role, mitochondrial aminoacyl-tRNA synthetase that catalyzes the ATP-dependent ligation of histidine to the 3'-end of its cognate tRNA, via the formation of an aminoacyl-adenylate intermediate (His-AMP). This chain is Histidine--tRNA ligase, mitochondrial (HARS2), found in Bos taurus (Bovine).